We begin with the raw amino-acid sequence, 501 residues long: Pentatricopeptide repeat-containing protein At4g16470 (501 aa).

PPR repeat units lie at residues 107-141, 142-172, 173-207, 208-242, 243-273, 274-308, 309-344, and 345-379; these read EPET…GFAL, NEYL…LKIR, DLIP…RIVP, DQYT…CIKS, NIIV…LSTR, NVIT…GCRP, NPVT…GIEP, and EGQH…EHPP. The type E motif stretch occupies residues 380–455; sequence VWGSLLGACR…DPGYSQIELQ (76 aa). The tract at residues 456–486 is type E(+) motif; the sequence is GEVHRFMKDDTSHRLSEKIYKKVHEMTSFFM.

It belongs to the PPR family. PCMP-E subfamily.

This chain is Pentatricopeptide repeat-containing protein At4g16470 (PCMP-E12), found in Arabidopsis thaliana (Mouse-ear cress).